The following is a 212-amino-acid chain: Glycerol-3-phosphate acyltransferase (212 aa).

5 consecutive transmembrane segments (helical) span residues 3–23 (ILLAALVAYLIGSVSFAVIVS), 51–71 (KAAILTLVGDAFKGWLAVWLA), 78–98 (DVAVAWVAIAVFVGHLYPVFF), 115–135 (AVHPVLGLATALTWLIVAFFF), and 139–159 (SLAALVAAVFAPVFDVFLFGT).

It belongs to the PlsY family. Probably interacts with PlsX.

The protein resides in the cell inner membrane. The catalysed reaction is an acyl phosphate + sn-glycerol 3-phosphate = a 1-acyl-sn-glycero-3-phosphate + phosphate. Its pathway is lipid metabolism; phospholipid metabolism. In terms of biological role, catalyzes the transfer of an acyl group from acyl-phosphate (acyl-PO(4)) to glycerol-3-phosphate (G3P) to form lysophosphatidic acid (LPA). This enzyme utilizes acyl-phosphate as fatty acyl donor, but not acyl-CoA or acyl-ACP. The protein is Glycerol-3-phosphate acyltransferase of Burkholderia vietnamiensis (strain G4 / LMG 22486) (Burkholderia cepacia (strain R1808)).